The primary structure comprises 469 residues: ATP synthase subunit beta (469 aa).

156-163 contacts ATP; sequence GGAGVGKT.

This sequence belongs to the ATPase alpha/beta chains family. As to quaternary structure, F-type ATPases have 2 components, CF(1) - the catalytic core - and CF(0) - the membrane proton channel. CF(1) has five subunits: alpha(3), beta(3), gamma(1), delta(1), epsilon(1). CF(0) has three main subunits: a(1), b(2) and c(9-12). The alpha and beta chains form an alternating ring which encloses part of the gamma chain. CF(1) is attached to CF(0) by a central stalk formed by the gamma and epsilon chains, while a peripheral stalk is formed by the delta and b chains.

It is found in the cell membrane. The enzyme catalyses ATP + H2O + 4 H(+)(in) = ADP + phosphate + 5 H(+)(out). In terms of biological role, produces ATP from ADP in the presence of a proton gradient across the membrane. The catalytic sites are hosted primarily by the beta subunits. The polypeptide is ATP synthase subunit beta (Lactococcus lactis subsp. cremoris (strain MG1363)).